The primary structure comprises 385 residues: Cytochrome b (385 aa).

The next 4 helical transmembrane spans lie at 32–52 (MGSL…FMAM), 76–98 (YILR…MHMA), 113–133 (LWNV…LGYC), and 179–199 (FFAL…MHLM). Positions 82 and 96 each coordinate heme b. Heme b contacts are provided by histidine 183 and histidine 197. Histidine 202 is an a ubiquinone binding site. 4 helical membrane-spanning segments follow: residues 225–245 (FIFK…LFVF), 289–309 (LLGV…PFTD), 321–341 (LSKF…QIGA), and 348–368 (YVLM…IIVP).

It belongs to the cytochrome b family. Fungal cytochrome b-c1 complex contains 10 subunits; 3 respiratory subunits, 2 core proteins and 5 low-molecular weight proteins. Cytochrome b-c1 complex is a homodimer. Heme b is required as a cofactor.

The protein localises to the mitochondrion inner membrane. Functionally, component of the ubiquinol-cytochrome c reductase complex (complex III or cytochrome b-c1 complex) that is part of the mitochondrial respiratory chain. The b-c1 complex mediates electron transfer from ubiquinol to cytochrome c. Contributes to the generation of a proton gradient across the mitochondrial membrane that is then used for ATP synthesis. This chain is Cytochrome b (COB), found in Saccharomyces paradoxus (Yeast).